Reading from the N-terminus, the 72-residue chain is Cytochrome c oxidase subunit 8C, mitochondrial (72 aa).

The transit peptide at 1 to 29 (MSRLLLLCSSLLRHRAVLFSKPGHPGRLS) directs the protein to the mitochondrion. The Mitochondrial matrix portion of the chain corresponds to 30–40 (HSESPQKKILS). A helical membrane pass occupies residues 41–64 (PTESAVGIVVFFTTFYIPAAYVLS). At 65 to 72 (SLKYFKGE) the chain is on the mitochondrial intermembrane side.

Belongs to the cytochrome c oxidase VIII family. Component of the cytochrome c oxidase (complex IV, CIV), a multisubunit enzyme composed of 14 subunits. The complex is composed of a catalytic core of 3 subunits MT-CO1, MT-CO2 and MT-CO3, encoded in the mitochondrial DNA, and 11 supernumerary subunits COX4I, COX5A, COX5B, COX6A, COX6B, COX6C, COX7A, COX7B, COX7C, COX8 and NDUFA4, which are encoded in the nuclear genome. The complex exists as a monomer or a dimer and forms supercomplexes (SCs) in the inner mitochondrial membrane with NADH-ubiquinone oxidoreductase (complex I, CI) and ubiquinol-cytochrome c oxidoreductase (cytochrome b-c1 complex, complex III, CIII), resulting in different assemblies (supercomplex SCI(1)III(2)IV(1) and megacomplex MCI(2)III(2)IV(2)).

Its subcellular location is the mitochondrion inner membrane. It functions in the pathway energy metabolism; oxidative phosphorylation. In terms of biological role, component of the cytochrome c oxidase, the last enzyme in the mitochondrial electron transport chain which drives oxidative phosphorylation. The respiratory chain contains 3 multisubunit complexes succinate dehydrogenase (complex II, CII), ubiquinol-cytochrome c oxidoreductase (cytochrome b-c1 complex, complex III, CIII) and cytochrome c oxidase (complex IV, CIV), that cooperate to transfer electrons derived from NADH and succinate to molecular oxygen, creating an electrochemical gradient over the inner membrane that drives transmembrane transport and the ATP synthase. Cytochrome c oxidase is the component of the respiratory chain that catalyzes the reduction of oxygen to water. Electrons originating from reduced cytochrome c in the intermembrane space (IMS) are transferred via the dinuclear copper A center (CU(A)) of subunit 2 and heme A of subunit 1 to the active site in subunit 1, a binuclear center (BNC) formed by heme A3 and copper B (CU(B)). The BNC reduces molecular oxygen to 2 water molecules using 4 electrons from cytochrome c in the IMS and 4 protons from the mitochondrial matrix. This Mus musculus (Mouse) protein is Cytochrome c oxidase subunit 8C, mitochondrial (Cox8c).